Consider the following 622-residue polypeptide: Dopamine beta-hydroxylase (622 aa).

The Cytoplasmic portion of the chain corresponds to 1–20; the sequence is MQAHLSHQPCWSSLPSPSVR. Residues 21-41 form a helical; Signal-anchor for type II membrane protein membrane-spanning segment; sequence EAASMYGTAVAIFLVILVAAL. Residues 42 to 621 are Intragranular-facing; the sequence is RGSEPPESPF…TVPITTEADA (580 aa). Residues 61–177 enclose the DOMON domain; sequence GILELSWNVS…DTVHLVYGIL (117 aa). N68 and N188 each carry an N-linked (GlcNAc...) asparagine glycan. 6 cysteine pairs are disulfide-bonded: C158-C600, C236-C287, C273-C299, C394-C507, C398-C569, and C470-C492. The active site involves Y234. Cu(2+) contacts are provided by H266 and H267. H337 serves as a coordination point for Cu(2+). Residue S350 is modified to Phosphoserine; by CaMK. Residue H416 is part of the active site. 2 residues coordinate Cu(2+): H416 and H418. N-linked (GlcNAc...) asparagine glycosylation is present at N476. Residue M491 coordinates Cu(2+). N-linked (GlcNAc...) asparagine glycosylation is present at N570. The segment at 594–622 is disordered; that stretch reads EEPTPRCPIRQTQSPANPTVPITTEADAE. The span at 603–615 shows a compositional bias: polar residues; that stretch reads RQTQSPANPTVPI.

Belongs to the copper type II ascorbate-dependent monooxygenase family. As to quaternary structure, homotetramer; composed of two disulfide-linked dimers. The cofactor is Cu(2+). In terms of processing, proteolytic cleavage after the membrane-anchor leads to the release of the soluble form. Post-translationally, N-glycosylated. As to expression, detected in adrenal gland secretory granules (at protein level). Detected in adrenal gland.

It is found in the cytoplasmic vesicle. The protein resides in the secretory vesicle lumen. It localises to the secretory vesicle. The protein localises to the chromaffin granule lumen. Its subcellular location is the secretory vesicle membrane. It is found in the chromaffin granule membrane. It catalyses the reaction dopamine + 2 L-ascorbate + O2 = (R)-noradrenaline + 2 monodehydro-L-ascorbate radical + H2O. The protein operates within catecholamine biosynthesis; (R)-noradrenaline biosynthesis; (R)-noradrenaline from dopamine: step 1/1. Functionally, catalyzes the hydroxylation of dopamine to noradrenaline (also known as norepinephrine), and is thus vital for regulation of these neurotransmitters. This chain is Dopamine beta-hydroxylase (Dbh), found in Mus musculus (Mouse).